Reading from the N-terminus, the 133-residue chain is Fluoride-specific ion channel FluC (133 aa).

Transmembrane regions (helical) follow at residues 4–24 (LLWI…LSVL), 35–55 (WGTL…WVLA), 66–86 (VFIF…SLES), and 107–127 (VLGL…LGGP). Na(+) contacts are provided by glycine 74 and threonine 77.

The protein belongs to the fluoride channel Fluc/FEX (TC 1.A.43) family.

The protein resides in the cell inner membrane. The enzyme catalyses fluoride(in) = fluoride(out). Its activity is regulated as follows. Na(+) is not transported, but it plays an essential structural role and its presence is essential for fluoride channel function. Fluoride-specific ion channel. Important for reducing fluoride concentration in the cell, thus reducing its toxicity. The sequence is that of Fluoride-specific ion channel FluC from Salinibacter ruber (strain DSM 13855 / M31).